The following is a 370-amino-acid chain: Pyruvate dehydrogenase E1 component subunit alpha (370 aa).

Heterodimer of an alpha and a beta chain. The cofactor is thiamine diphosphate.

It catalyses the reaction N(6)-[(R)-lipoyl]-L-lysyl-[protein] + pyruvate + H(+) = N(6)-[(R)-S(8)-acetyldihydrolipoyl]-L-lysyl-[protein] + CO2. Functionally, the pyruvate dehydrogenase complex catalyzes the overall conversion of pyruvate to acetyl-CoA and CO(2). It contains multiple copies of three enzymatic components: pyruvate dehydrogenase (E1), dihydrolipoamide acetyltransferase (E2) and lipoamide dehydrogenase (E3). The sequence is that of Pyruvate dehydrogenase E1 component subunit alpha (pdhA) from Staphylococcus aureus (strain COL).